Consider the following 181-residue polypeptide: MVDSDGFRPNVGIIVANDDGRVLWARRAGEDAWQFPQGGVEANETPLEALYRELREEVGLGPADVAVLGATRRWLRYRLPRRMIRRRGSRCIGQKQIWFLLRLLADEQRVRVDRVARPEFDRWRWVDYWYPVEEVIFFKRQVYRQALQELSGYLQADDWAGTGTEGGPAAVIPPAARRRLR.

The region spanning 6–148 (GFRPNVGIIV…KRQVYRQALQ (143 aa)) is the Nudix hydrolase domain. A Nudix box motif is present at residues 38-59 (GGVEANETPLEALYRELREEVG).

Belongs to the Nudix hydrolase family. RppH subfamily. Requires a divalent metal cation as cofactor.

In terms of biological role, accelerates the degradation of transcripts by removing pyrophosphate from the 5'-end of triphosphorylated RNA, leading to a more labile monophosphorylated state that can stimulate subsequent ribonuclease cleavage. This is RNA pyrophosphohydrolase from Halorhodospira halophila (strain DSM 244 / SL1) (Ectothiorhodospira halophila (strain DSM 244 / SL1)).